Reading from the N-terminus, the 103-residue chain is Large ribosomal subunit protein bL21 (103 aa).

It belongs to the bacterial ribosomal protein bL21 family. As to quaternary structure, part of the 50S ribosomal subunit. Contacts protein L20.

This protein binds to 23S rRNA in the presence of protein L20. The sequence is that of Large ribosomal subunit protein bL21 from Beijerinckia indica subsp. indica (strain ATCC 9039 / DSM 1715 / NCIMB 8712).